We begin with the raw amino-acid sequence, 109 residues long: Cortistatin (109 aa).

The N-terminal stretch at 1–25 (MMGGRGTGGKWPSAFGLLLLWGVAA) is a signal peptide. A propeptide spanning residues 26 to 93 (SALPLESGPT…PPPQQPPHLD (68 aa)) is cleaved from the precursor. Residues 64–97 (ASSSTPVGGGTPGLSKSQERPPPQQPPHLDKKPC) are disordered. C97 and C108 are joined by a disulfide.

The protein belongs to the somatostatin family. In terms of tissue distribution, expressed in a subset of GABAergic cells in the cortex and hippocampus.

The protein resides in the secreted. This chain is Cortistatin (Cort), found in Mus musculus (Mouse).